Reading from the N-terminus, the 117-residue chain is Ribonuclease P protein component (117 aa).

Belongs to the RnpA family. As to quaternary structure, consists of a catalytic RNA component (M1 or rnpB) and a protein subunit.

It catalyses the reaction Endonucleolytic cleavage of RNA, removing 5'-extranucleotides from tRNA precursor.. Its function is as follows. RNaseP catalyzes the removal of the 5'-leader sequence from pre-tRNA to produce the mature 5'-terminus. It can also cleave other RNA substrates such as 4.5S RNA. The protein component plays an auxiliary but essential role in vivo by binding to the 5'-leader sequence and broadening the substrate specificity of the ribozyme. This chain is Ribonuclease P protein component, found in Staphylococcus aureus (strain MW2).